Consider the following 827-residue polypeptide: MWFWSRDPARDFPYDVTGEREELPAGWGVQKGKKKTGGDAVSVFTYEIRPGAEEQTQAAKTALKRIKTLKHPNILSYVDGLETDKCLYIVTEPVTPLGTYVKLRTDSGGVSELEISWGLHQIVKALSFLVNDGNLIHNNVCMSAVFVDRAGEWKLGGLDYMYTAGAEDTAPLKGIEMEKYNPPEKTDRSKTSKEKWSADMWCLGCLIWEVFNGPLPRPTALRSLGKIPKSLVPHYCELVGANPKVRPNPARFLQNCRSPGGFFCNSFVETNLFLEEIQIKDPAEKQTFFEQLSENLDSFPEDFCRHKILPQLLTAFEFGSAGAVVLPPLFKIGKFLNADEYQQKIIPVVVKMFSSTDRAMRIRLLQQMENFIQYLNEPTVNAQIFPHVVHGFMDTNPAIREQTVKSMLLLAPKLNENNLNMELMKHFARLQARDDQGPIRCNTTVCLGKIAPYLNPATRQRVLISAFSRATKDPFSPSRAAGVLGFAATHNFYSLTDCAGKVLPVLCGVTVDPEKNVREQAFKAIRSFLDKLETVSEDPSQLAELEKDVHTASVSPSVVGGWAGWAVTGVSSLTSKFIRTGGGAQDAAASEGASAPSTASEASKPDTAPSSSAPPAAASTAPTSYEPEEEKGAPDNSLDRWDDEDWGSLEDAEQNRGQTENDDWDTDWGHGKTQEKTVDFSSSRSKTKQVSPPPNRTSALDDGWGWDDAFQTVPPSKEHTASKSQQLEGTRPASDYNWDTSGSSGRQGDFFASLSEPSSQKNDNRNSDSAGDWGGDDNWESVEADQGLSKAEMARKKREERQKEIEAKRAERRAAKGPLKLGVRKLD.

The Protein kinase domain maps to 1–309; it reads MWFWSRDPAR…PEDFCRHKIL (309 aa). 3 HEAT repeats span residues 345 to 383, 384 to 422, and 502 to 540; these read IIPV…VNAQ, IFPH…LNME, and VLPV…EDPS. A compositionally biased stretch (low complexity) spans 586-624; it reads DAAASEGASAPSTASEASKPDTAPSSSAPPAAASTAPTS. The segment at 586 to 827 is disordered; it reads DAAASEGASA…PLKLGVRKLD (242 aa). Residues 630–640 show a composition bias toward basic and acidic residues; sequence EKGAPDNSLDR. The segment covering 641–652 has biased composition (acidic residues); the sequence is WDDEDWGSLEDA. Over residues 667–678 the composition is skewed to basic and acidic residues; it reads DWGHGKTQEKTV. Polar residues-rich tracts occupy residues 679 to 690 and 737 to 746; these read DFSSSRSKTKQV and NWDTSGSSGR. The span at 774–783 shows a compositional bias: acidic residues; it reads GGDDNWESVE. Positions 788-817 form a coiled coil; that stretch reads LSKAEMARKKREERQKEIEAKRAERRAAKG. Over residues 792–814 the composition is skewed to basic and acidic residues; the sequence is EMARKKREERQKEIEAKRAERRA.

The protein belongs to the protein kinase superfamily.

In terms of biological role, regulates COPI-mediated retrograde protein traffic at the interface between the Golgi apparatus and the endoplasmic reticulum. Involved in the maintenance of the Golgi apparatus morphology. The protein is N-terminal kinase-like protein (scyl1) of Xenopus tropicalis (Western clawed frog).